A 390-amino-acid chain; its full sequence is Mannitol-1-phosphate 5-dehydrogenase (390 aa).

7 to 18 (AVHFGGGNIGRG) contributes to the NAD(+) binding site. Lysine 216 is an active-site residue.

The protein belongs to the mannitol dehydrogenase family. In terms of assembly, monomer.

It carries out the reaction D-mannitol 1-phosphate + NAD(+) = beta-D-fructose 6-phosphate + NADH + H(+). Functionally, catalyzes the NAD(H)-dependent interconversion of D-fructose 6-phosphate and D-mannitol 1-phosphate in the mannitol metabolic pathway. Required for the process of sporulation on senescing leaf material. This chain is Mannitol-1-phosphate 5-dehydrogenase (mpd1), found in Phaeosphaeria nodorum (strain SN15 / ATCC MYA-4574 / FGSC 10173) (Glume blotch fungus).